We begin with the raw amino-acid sequence, 458 residues long: UDP-N-acetylmuramate--L-alanine ligase (458 aa).

112-118 (GTHGKTT) contacts ATP.

This sequence belongs to the MurCDEF family.

The protein localises to the cytoplasm. It catalyses the reaction UDP-N-acetyl-alpha-D-muramate + L-alanine + ATP = UDP-N-acetyl-alpha-D-muramoyl-L-alanine + ADP + phosphate + H(+). It functions in the pathway cell wall biogenesis; peptidoglycan biosynthesis. Cell wall formation. This chain is UDP-N-acetylmuramate--L-alanine ligase, found in Geotalea uraniireducens (strain Rf4) (Geobacter uraniireducens).